The following is a 340-amino-acid chain: Armadillo repeat-containing protein 12 (340 aa).

The interaction with TBC1D15 stretch occupies residues 1–101 (MGKSIPQYLG…SITRCVYLLE (101 aa)). ARM repeat units lie at residues 100–139 (LEAEASACTTDDIVLLGYMLDDKDNSVKTQALNTLKAFSG), 179–218 (LPDYVHPQLRRVMPALMEILQSDYILAQVQAVRLLSYLAQ), and 278–318 (SLHE…SLQY).

Interacts with TBC1D15, TBC1D21, GK2 and IMMT. Interacts with VDAC2 and VDAC3 in a TBC1D21-dependent manner. Interacts (via ARM domains) with RBBP4. In terms of tissue distribution, expressed in testis. Highly expressed in the mid-piece of the elongated and late spermatids. Expressed at higher levels in neuroblastoma tissues and cell lines, than those of normal dorsal ganglia (at protein level). Expressed in breast cancer, colon cancer, hepatocellular carcinoma, lung cancer, pancreas cancer, prostate cancer, renal cancer and gastric cancer, but not in their normal counterparts.

It is found in the nucleus. The protein localises to the mitochondrion outer membrane. Its function is as follows. Essential for male fertility and sperm mitochondrial sheath formation. Required for proper mitochondrial elongation and coiling along the flagellum during the formation of the mitochondrial sheath. Facilitates the growth and aggressiveness of neuroblastoma cells. Increases the EZH2 activity and H3K27me3 levels in a RBBP4-dependent manner, and facilitates the enrichment of polycomb repressive complex 2 and H3K27me3 on gene promoters, resulting in transcriptional repression of tumor suppressors affecting the proliferation, invasion, and metastasis of tumor cells. This chain is Armadillo repeat-containing protein 12 (ARMC12), found in Homo sapiens (Human).